A 972-amino-acid polypeptide reads, in one-letter code: SWI/SNF-related matrix-associated actin-dependent regulator of chromatin subfamily A containing DEAD/H box 1A (972 aa).

3 disordered regions span residues 15–76, 125–177, and 217–333; these read NAVG…SDLQ, DEDS…EKQE, and SSTD…EDSI. Basic and acidic residues-rich tracts occupy residues 22-42 and 63-72; these read KSPD…RKAD and EVVRMGKDSA. The 46-residue stretch at 82-127 folds into the CUE 1 domain; that stretch reads DMEDKIIKLLEIFPQKSKKDLLEVIENTSTLDGAVAHCLMIYGDED. Over residues 128 to 138 the composition is skewed to basic and acidic residues; sequence SGGRKDKGGRS. Acidic residues predominate over residues 156 to 169; the sequence is SESEDEDSEDEESE. The CUE 2 domain maps to 175–218; that stretch reads KQEALLKKLKRKLPDIEKEVLRDILKEHDWDYENALGSLLVFSS. Residues 237–246 are compositionally biased toward basic and acidic residues; sequence HSKEKTDKIT. The segment covering 247 to 263 has biased composition (polar residues); it reads QRPSGSSSLSRWLTAAS. Low complexity predominate over residues 279 to 290; that stretch reads KSALSKSTSKNS. The segment covering 307 to 332 has biased composition (acidic residues); that stretch reads ASEDEDEIDSDVDSMSDDQDSEDEDS. Residues 460–628 enclose the Helicase ATP-binding domain; the sequence is ILLHQHKLSG…MSLLNFIMPS (169 aa). 473–480 is a binding site for ATP; that stretch reads DEMGLGKT. Residues 579–582 carry the DEGH box motif; it reads DEGH. Positions 805–966 constitute a Helicase C-terminal domain; that stretch reads LLTKTLAKLK…AITEQMAELL (162 aa).

It belongs to the SNF2/RAD54 helicase family.

The protein resides in the nucleus. Its subcellular location is the chromosome. It carries out the reaction ATP + H2O = ADP + phosphate + H(+). In terms of biological role, DNA helicase that possesses intrinsic ATP-dependent nucleosome-remodeling activity and is both required for DNA repair and heterochromatin organization. Promotes DNA end resection of double-strand breaks (DSBs) following DNA damage: probably acts by weakening histone DNA interactions in nucleosomes flanking DSBs. Required for the restoration of heterochromatin organization after replication. This Danio rerio (Zebrafish) protein is SWI/SNF-related matrix-associated actin-dependent regulator of chromatin subfamily A containing DEAD/H box 1A (smarcad1a).